We begin with the raw amino-acid sequence, 238 residues long: Ras association domain-containing protein 3 (238 aa).

An N-acetylserine modification is found at Ser-2. Residues 26-48 (RAPQGKPRSGQQDVEKEKETHSY) are disordered. The span at 38–48 (DVEKEKETHSY) shows a compositional bias: basic and acidic residues. A Ras-associating domain is found at 79 to 186 (YTGFIKVQME…TLSFVLREHE (108 aa)). One can recognise an SARAH domain in the interval 187-234 (IGEWEAFSLPELQNFLRILDKEEDEQLQNLKRRYTAYRQKLEEALREV).

In terms of tissue distribution, widely expressed.

The protein localises to the cytoplasm. The protein resides in the cytoskeleton. This chain is Ras association domain-containing protein 3 (RASSF3), found in Homo sapiens (Human).